Here is a 434-residue protein sequence, read N- to C-terminus: ATP-dependent protease ATPase subunit HslU (434 aa).

ATP contacts are provided by residues V18, 60 to 65, D247, E312, and R384; that span reads GVGKTE.

It belongs to the ClpX chaperone family. HslU subfamily. As to quaternary structure, a double ring-shaped homohexamer of HslV is capped on each side by a ring-shaped HslU homohexamer. The assembly of the HslU/HslV complex is dependent on binding of ATP.

The protein localises to the cytoplasm. Functionally, ATPase subunit of a proteasome-like degradation complex; this subunit has chaperone activity. The binding of ATP and its subsequent hydrolysis by HslU are essential for unfolding of protein substrates subsequently hydrolyzed by HslV. HslU recognizes the N-terminal part of its protein substrates and unfolds these before they are guided to HslV for hydrolysis. The protein is ATP-dependent protease ATPase subunit HslU of Hyphomonas neptunium (strain ATCC 15444).